A 771-amino-acid polypeptide reads, in one-letter code: Endoplasmin homolog (771 aa).

Residues 1–24 (MANSSLLRVVLVALLLLGSVTVSA) form the signal peptide. Positions 63, 109, and 160 each coordinate ATP. Asparagine 63 is a glycosylation site (N-linked (GlcNAc...) asparagine). The tract at residues 254–282 (AATPESAAEERSLDEGAVEEDPDKEGDTQ) is disordered. Residues asparagine 306 and asparagine 402 are each glycosylated (N-linked (GlcNAc...) asparagine). Residues 727–771 (ADDSLLPPDDAEYTVSDTETEEEEEQPKVDTNAHEEAETDGEGDL) are disordered. Residues 752–762 (QPKVDTNAHEE) are compositionally biased toward basic and acidic residues. Positions 768–771 (EGDL) match the Prevents secretion from ER motif.

This sequence belongs to the heat shock protein 90 family. As to quaternary structure, homotetramer.

It is found in the endoplasmic reticulum. Functionally, molecular chaperone that functions in the processing and transport of secreted proteins. Required for the synthesis of lipophosphoglycan (LPG), a cell surface glycoconjugate. Necessary for the attachment of the galactosyl residue to the mannose within the phosphoglycan repeats of the nascent LPG chain. Also required for addition of phosphoglycan to acid phosphatase. Not required for normal growth. Has ATPase activity. Binds heparin with micromolar affinity which may facilitate infection of host cells. The protein is Endoplasmin homolog of Leishmania donovani.